Consider the following 578-residue polypeptide: Endonuclease GajA (578 aa).

The interval 1–341 is ATPase domain; sequence MKFSNITIKN…RLIRVHSTEK (341 aa). Position 32 to 36 (32 to 36) interacts with ATP; it reads DIGKT. Positions 370–510 are toprim domain; it reads LFAERVLLIE…LGERIYLSEI (141 aa). Residues Glu379, Glu383, Asp463, Glu464, and Glu513 each coordinate a divalent metal cation.

As to quaternary structure, homotetramer. Forms the core of the anti-phage defense complex. Interacts with GajB; 2 GajB dimers dock at opposite sides of the GajA complex to form a 4:4 GajA-GajB assembly (GajAB). GajAB interacts with Bacillus phage Phi3T Gad1 protein; this interaction forms a 4:4:8 GajAB-Gad1 complex and leads to GajAB inhibition. It depends on Mg(2+) as a cofactor. Requires Mn(2+) as cofactor.

With respect to regulation, endonuclease activity inhibited by all NTPs, dNTPs, NDPs (at 0.5 mM, UDP not tested) and AMP-PNP; not inhibited by any tested NMP, dNMP or nucleoside. Inhibited by 100 mM NaCl, 100 mM KCl, 0.5 mM Co(2+) and 0.5 mM Ni(2+). In terms of biological role, component of antiviral defense system Gabija type I, composed of GajA and GajB. Endonuclease that nicks double-stranded DNA within the sequence 5'-TNNNCGGGNNA-3' in the absence of nucleotides (NTP, dNTP and NDPs), cleaving after C-1. Has no detected ATPase activity. Expression of Gabija type I in B.subtilis (strain BEST7003) confers resistance to phages phi105, phi29, rho14, SpBeta and SBSphiC. Expression of Gabija type I in E.coli B (strain ATCC 11303) confers resistance to phage T7. It is thought that this enzyme is strongly suppressed during physiological growth (in E.coli total nucleotide concentration is over 8.7 mM in mid-log phase), but during viral replication, when nucleotides are rapidly consumed, it is de-suppressed and degrades target DNA. This Bacillus cereus (strain VD045) protein is Endonuclease GajA.